Here is a 116-residue protein sequence, read N- to C-terminus: Dynein light chain Tctex-type 3 (116 aa).

Y4 bears the 3'-nitrotyrosine mark.

This sequence belongs to the dynein light chain Tctex-type family. Homodimer. The cytoplasmic dynein 1 complex consists of two catalytic heavy chains (HCs) and a number of non-catalytic subunits presented by intermediate chains (ICs), light intermediate chains (LICs) and light chains (LCs); the composition seems to vary in respect to the IC, LIC and LC composition. The heavy chain homodimer serves as a scaffold for the probable homodimeric assembly of the respective non-catalytic subunits. The ICs and LICs bind directly to the HC dimer and the LCs assemble on the IC dimer. DYNLT1 and DYNLT3 compete for association with dynein IC (DYNC1I1 or DYNC1I2). Self-associates. Interacts with DYNC1I1 and DYNC1I2. Interacts with BUB3. Interacts with SATB1 in nucleus to form complex with matrix attachment regions (MARs) of DNA.

The protein resides in the nucleus. It is found in the cytoplasm. Its subcellular location is the cytoskeleton. It localises to the chromosome. The protein localises to the centromere. The protein resides in the kinetochore. In terms of biological role, acts as one of several non-catalytic accessory components of the cytoplasmic dynein 1 complex that are thought to be involved in linking dynein to cargos and to adapter proteins that regulate dynein function. Cytoplasmic dynein 1 acts as a motor for the intracellular retrograde motility of vesicles and organelles along microtubules. Probably binds BUB3 as part of transport cargo. Required for the efficient progression through mitosis. The sequence is that of Dynein light chain Tctex-type 3 (DYNLT3) from Ovis aries (Sheep).